The primary structure comprises 81 residues: Thrombin-like enzyme collinein-3 (81 aa).

Residue aspartate 4 is part of the active site. Residues cysteine 51 and cysteine 68 are joined by a disulfide bond.

Monomer. In terms of tissue distribution, expressed by the vanom gland.

The protein localises to the secreted. Its function is as follows. Thrombin-like snake venom serine protease. The chain is Thrombin-like enzyme collinein-3 from Crotalus durissus collilineatus (Brazilian rattlesnake).